A 724-amino-acid chain; its full sequence is Protein-glutamine gamma-glutamyltransferase 5 (724 aa).

Residue A2 is modified to N-acetylalanine. Catalysis depends on residues C283, H342, and D365. N405, D407, E453, and E458 together coordinate Ca(2+). Polar residues-rich tracts occupy residues 473–486 and 495–505; these read RSQG…NPFS and ARSPDSPSLQP. The interval 473-505 is disordered; it reads RSQGPHQANSNPFSSVPPRHNSARSPDSPSLQP.

Belongs to the transglutaminase superfamily. Transglutaminase family. The cofactor is Ca(2+).

Its subcellular location is the cytoplasm. The enzyme catalyses L-glutaminyl-[protein] + L-lysyl-[protein] = [protein]-L-lysyl-N(6)-5-L-glutamyl-[protein] + NH4(+). Its function is as follows. Catalyzes the cross-linking of proteins and the conjugation of polyamines to proteins. Contributes to the formation of the cornified cell envelope of keratinocytes. The polypeptide is Protein-glutamine gamma-glutamyltransferase 5 (Tgm5) (Mus musculus (Mouse)).